The primary structure comprises 531 residues: Isocitrate lyase (531 aa).

Residue 101 to 103 participates in substrate binding; the sequence is SGW. D184 provides a ligand contact to Mg(2+). C222 serves as the catalytic Proton acceptor. Residues 223–224, 380–384, and T451 each bind substrate; these read GH and NNSPS.

This sequence belongs to the isocitrate lyase/PEP mutase superfamily. Isocitrate lyase family. As to quaternary structure, homotetramer. The cofactor is Mg(2+).

The catalysed reaction is D-threo-isocitrate = glyoxylate + succinate. The protein operates within carbohydrate metabolism; glyoxylate cycle; (S)-malate from isocitrate: step 1/2. In terms of biological role, involved in the metabolic adaptation in response to environmental changes. Catalyzes the reversible formation of succinate and glyoxylate from isocitrate, a key step of the glyoxylate cycle, which operates as an anaplerotic route for replenishing the tricarboxylic acid cycle during growth on fatty acid substrates. This Pseudomonas aeruginosa (strain ATCC 15692 / DSM 22644 / CIP 104116 / JCM 14847 / LMG 12228 / 1C / PRS 101 / PAO1) protein is Isocitrate lyase.